Here is a 361-residue protein sequence, read N- to C-terminus: Chalcone synthase A (361 aa).

C168 is a catalytic residue.

It belongs to the thiolase-like superfamily. Chalcone/stilbene synthases family.

The enzyme catalyses (E)-4-coumaroyl-CoA + 3 malonyl-CoA + 3 H(+) = 2',4,4',6'-tetrahydroxychalcone + 3 CO2 + 4 CoA. It functions in the pathway secondary metabolite biosynthesis; flavonoid biosynthesis. In terms of biological role, the primary product of this enzyme is 4,2',4',6'-tetrahydroxychalcone (also termed naringenin-chalcone or chalcone) which can under specific conditions spontaneously isomerize into naringenin. This is Chalcone synthase A (CHSA) from Ipomoea cordatotriloba (Tievine).